A 77-amino-acid chain; its full sequence is UPF0270 protein Spro_4577 (77 aa).

This sequence belongs to the UPF0270 family.

The chain is UPF0270 protein Spro_4577 from Serratia proteamaculans (strain 568).